Here is a 133-residue protein sequence, read N- to C-terminus: Putative redox protein FMP46, mitochondrial (133 aa).

Residues 1–21 (MSFWKTLQRQPRTISLFTNDI) constitute a mitochondrion transit peptide. Cysteine 97 is an active-site residue.

This sequence belongs to the FMP46 family.

It is found in the mitochondrion. Its function is as follows. Putative mitochondrial redox protein which could be involved in the reduction of small toxic molecules. The polypeptide is Putative redox protein FMP46, mitochondrial (FMP46) (Saccharomyces cerevisiae (strain ATCC 204508 / S288c) (Baker's yeast)).